Consider the following 240-residue polypeptide: 26.7 kDa heat shock protein, chloroplastic (240 aa).

The transit peptide at 1 to 43 (MAAPFALVSRVSPAARLPIRAAWRRARPTVGLPSSGRARQLAV) directs the protein to the chloroplast. The tract at residues 59–84 (HVNQDGGNQQGNAVQRRPRRSSALDG) is disordered. The sHSP domain occupies 126–240 (LATGEVRMPW…ERKVIDVQVQ (115 aa)).

Belongs to the small heat shock protein (HSP20) family. In terms of assembly, may form oligomeric structures. As to expression, expressed in roots, stems, leaves, spikelets and embryos.

It localises to the plastid. The protein localises to the chloroplast. This Oryza sativa subsp. japonica (Rice) protein is 26.7 kDa heat shock protein, chloroplastic (HSP26.7).